The following is a 251-amino-acid chain: Zinc import ATP-binding protein ZnuC (251 aa).

The ABC transporter domain occupies V5–R220. Residue G37 to S44 participates in ATP binding.

It belongs to the ABC transporter superfamily. Zinc importer (TC 3.A.1.15.5) family. As to quaternary structure, the complex is composed of two ATP-binding proteins (ZnuC), two transmembrane proteins (ZnuB) and a solute-binding protein (ZnuA).

It localises to the cell inner membrane. The enzyme catalyses Zn(2+)(out) + ATP(in) + H2O(in) = Zn(2+)(in) + ADP(in) + phosphate(in) + H(+)(in). Its function is as follows. Part of the ABC transporter complex ZnuABC involved in zinc import. Responsible for energy coupling to the transport system. The polypeptide is Zinc import ATP-binding protein ZnuC (Salmonella choleraesuis (strain SC-B67)).